The primary structure comprises 1031 residues: LRR receptor-like serine/threonine-protein kinase EFR (1031 aa).

The signal sequence occupies residues 1 to 24 (MKLSFSLVFNALTLLLQVCIFAQA). At 25–653 (RFSNETDMQA…LSVRKKVVSG (629 aa)) the chain is on the extracellular side. N28, N55, and N95 each carry an N-linked (GlcNAc...) asparagine glycan. LRR repeat units lie at residues 98-120 (FLRL…VGRL), 122-144 (RLQY…LSNC), 146-168 (RLST…LGSL), 170-193 (KLAI…GNLT), 194-216 (SLQK…VARL), 218-240 (QMVF…LYNI), 242-264 (SLES…FGYL), 267-289 (NLRR…LANI), 291-312 (SLER…SFGK), and 315-335 (NLWW…SGLE). 2 N-linked (GlcNAc...) asparagine glycosylation sites follow: N127 and N143. N-linked (GlcNAc...) asparagine glycans are attached at residues N180 and N191. The N-linked (GlcNAc...) asparagine glycan is linked to N239. A glycan (N-linked (GlcNAc...) asparagine) is linked at N288. N323, N329, N342, and N366 each carry an N-linked (GlcNAc...) asparagine glycan. LRR repeat units follow at residues 345-368 (QLEY…ANLS), 370-392 (TLTS…IGNL), 394-416 (SLQE…FGKL), 418-440 (NLQV…FGNM), 442-464 (RLQK…LGRC), 466-487 (YLLD…EILQ), 490-512 (SLAY…VGKL), 514-536 (LLVG…IGGC), 538-560 (SMEF…SRLV), 561-584 (SLKN…ASLP), and 585-597 (SLRN…NKFE). An N-linked (GlcNAc...) asparagine glycan is attached at N439. N478 is a glycosylation site (N-linked (GlcNAc...) asparagine). N571, N590, and N608 each carry an N-linked (GlcNAc...) asparagine glycan. A helical transmembrane segment spans residues 654–674 (ICIGIASLLLIIIVASLCWFM). Topologically, residues 675-1031 (KRKKKNNASD…WMLNTDMHTM (357 aa)) are cytoplasmic. Phosphothreonine is present on T709. The Protein kinase domain maps to 712–1001 (FSSTNLIGSG…ELISIRSKFF (290 aa)). ATP is bound by residues 718 to 726 (IGSGNFGNV) and K741. Residues Y791 and Y836 each carry the phosphotyrosine modification. Residue D849 is the Proton acceptor of the active site. Position 897 is a phosphotyrosine (Y897). Polar residues predominate over residues 1005–1020 (TTITESPRDAPQSSPQ). Residues 1005 to 1031 (TTITESPRDAPQSSPQEWMLNTDMHTM) form a disordered region.

This sequence belongs to the protein kinase superfamily. Ser/Thr protein kinase family. Binds to Pseudomonas syringae AvrPto1 and (via the kinase and cytoplasmic domains) to hopD2. Interacts with SERK3/BAK1, SERK4/BKK1, SERK1 and SERK2 in a specific ligand-induced manner. Binds to IOS1. Binds to BIK1 in the absence of pathogen elicitor; dissociates upon pathogen-associated molecular pattern (PAMP)-triggered activation. Autophosphorylated after elicitation with elfl18. Autophosphorylation is inhibited by the binding with avrPto1. Phosphorylation at T-836 is required for immune signaling. In terms of processing, polyubiquitinated at the kinase domain mediated by P.syringae AvrPtoB.

Its subcellular location is the cell membrane. The protein localises to the endomembrane system. It catalyses the reaction L-seryl-[protein] + ATP = O-phospho-L-seryl-[protein] + ADP + H(+). The catalysed reaction is L-threonyl-[protein] + ATP = O-phospho-L-threonyl-[protein] + ADP + H(+). Its function is as follows. Constitutes the pattern-recognition receptor (PPR) that determines the specific perception of elongation factor Tu (EF-Tu), a potent elicitor of the defense response to pathogen-associated molecular patterns (PAMPs); phosphorylates BIK1 upon elicitation to regulate immune responses such as defense hormone expression (e.g. jasmonic acid (JA) and salicylic acid (SA)). Reduces transformation by Rhizobium radiobacter probably by inducing plant defense during the interaction. Binding to the effector AvrPto1 from P.syringae blocks the downstream plant immune response while interaction with hopD2 decreases the phosphorylation level of EFR upon elf18 treatment. Specific endoplasmic reticulum quality control components (ERD2B, CRT3, UGGT and STT3A) are required for the biogenesis of EFR. The protein is LRR receptor-like serine/threonine-protein kinase EFR of Arabidopsis thaliana (Mouse-ear cress).